A 176-amino-acid polypeptide reads, in one-letter code: Ferritin, middle subunit (176 aa).

One can recognise a Ferritin-like diiron domain in the interval 7–156 (QNYHHDCERA…DHITNLTKMD (150 aa)). Fe cation-binding residues include Glu24, Glu59, His62, Glu104, and Gln138.

Belongs to the ferritin family. As to quaternary structure, oligomer of 24 subunits. There are at least two types of subunits. The functional molecule forms a roughly spherical shell with a diameter of 12 nm and contains a central cavity into which the insoluble mineral iron core is deposited. In terms of tissue distribution, almost exclusively in the gonads.

It catalyses the reaction 4 Fe(2+) + O2 + 4 H(+) = 4 Fe(3+) + 2 H2O. Its function is as follows. Stores iron in a soluble, non-toxic, readily available form. Important for iron homeostasis. Has ferroxidase activity. Iron is taken up in the ferrous form and deposited as ferric hydroxides after oxidation. In Salmo salar (Atlantic salmon), this protein is Ferritin, middle subunit.